Here is a 508-residue protein sequence, read N- to C-terminus: Photosystem II CP47 reaction center protein (508 aa).

A run of 6 helical transmembrane segments spans residues 21–36, 101–115, 140–156, 203–218, 237–252, and 457–472; these read SVHIMHTALVAGWAGS, IMFSGLMFLAAIWHW, GIHLFLSGVACFGFGAF, IAAGILGILAGLFHLS, VLSSSIAAVFFAAFIV, and TFALLFFSGHIWHGAR.

The protein belongs to the PsbB/PsbC family. PsbB subfamily. As to quaternary structure, PSII is composed of 1 copy each of membrane proteins PsbA, PsbB, PsbC, PsbD, PsbE, PsbF, PsbH, PsbI, PsbJ, PsbK, PsbL, PsbM, PsbT, PsbX, PsbY, PsbZ, Psb30/Ycf12, at least 3 peripheral proteins of the oxygen-evolving complex and a large number of cofactors. It forms dimeric complexes. Binds multiple chlorophylls. PSII binds additional chlorophylls, carotenoids and specific lipids. serves as cofactor.

The protein resides in the plastid. The protein localises to the chloroplast thylakoid membrane. Its function is as follows. One of the components of the core complex of photosystem II (PSII). It binds chlorophyll and helps catalyze the primary light-induced photochemical processes of PSII. PSII is a light-driven water:plastoquinone oxidoreductase, using light energy to abstract electrons from H(2)O, generating O(2) and a proton gradient subsequently used for ATP formation. In Pinus koraiensis (Korean pine), this protein is Photosystem II CP47 reaction center protein.